Consider the following 166-residue polypeptide: Signal peptidase complex catalytic subunit SEC11 (166 aa).

At 1-9 the chain is on the cytoplasmic side; it reads MNIRQQLTQ. The chain crosses the membrane as a helical; Signal-anchor for type II membrane protein span at residues 10 to 30; sequence LLTLGYVFASAFMLWKTLSVV. Residues 31–166 lie on the Lumenal side of the membrane; the sequence is ANLHSPIVVV…LGLSSLFSNE (136 aa). Active-site charge relay system residues include serine 44, histidine 83, and aspartate 108. Residues 152–163 form a C-terminal short (CTS) helix region; the sequence is GLLGLLGLSSLF.

It belongs to the peptidase S26B family. In terms of assembly, component of the signal peptidase complex (SPC) composed of a catalytic subunit SEC11 and three accessory subunits SPC1, SPC2 and SPC3. The complex induces a local thinning of the ER membrane which is used to measure the length of the signal peptide (SP) h-region of protein substrates. This ensures the selectivity of the complex towards h-regions shorter than 18-20 amino acids. SPC associates with the translocon complex.

The protein resides in the endoplasmic reticulum membrane. It catalyses the reaction Cleavage of hydrophobic, N-terminal signal or leader sequences from secreted and periplasmic proteins.. In terms of biological role, catalytic component of the signal peptidase complex (SPC) which catalyzes the cleavage of N-terminal signal sequences from nascent proteins as they are translocated into the lumen of the endoplasmic reticulum. Specifically cleaves N-terminal signal peptides that contain a hydrophobic alpha-helix (h-region) shorter than 18-20 amino acids. This chain is Signal peptidase complex catalytic subunit SEC11 (SEC11), found in Lodderomyces elongisporus (strain ATCC 11503 / CBS 2605 / JCM 1781 / NBRC 1676 / NRRL YB-4239) (Yeast).